A 473-amino-acid chain; its full sequence is Ribulose bisphosphate carboxylase large chain (473 aa).

2 residues coordinate substrate: asparagine 116 and threonine 166. Lysine 168 functions as the Proton acceptor in the catalytic mechanism. A substrate-binding site is contributed by lysine 170. The Mg(2+) site is built by lysine 194, aspartate 196, and glutamate 197. Lysine 194 is subject to N6-carboxylysine. Histidine 287 serves as the catalytic Proton acceptor. Residues arginine 288, histidine 320, and serine 372 each contribute to the substrate site.

This sequence belongs to the RuBisCO large chain family. Type I subfamily. In terms of assembly, heterohexadecamer of 8 large chains and 8 small chains. Requires Mg(2+) as cofactor.

The catalysed reaction is 2 (2R)-3-phosphoglycerate + 2 H(+) = D-ribulose 1,5-bisphosphate + CO2 + H2O. The enzyme catalyses D-ribulose 1,5-bisphosphate + O2 = 2-phosphoglycolate + (2R)-3-phosphoglycerate + 2 H(+). Functionally, ruBisCO catalyzes two reactions: the carboxylation of D-ribulose 1,5-bisphosphate, the primary event in carbon dioxide fixation, as well as the oxidative fragmentation of the pentose substrate. Both reactions occur simultaneously and in competition at the same active site. The sequence is that of Ribulose bisphosphate carboxylase large chain from Rhodobacter capsulatus (strain ATCC BAA-309 / NBRC 16581 / SB1003).